The following is a 1277-amino-acid chain: Y' element ATP-dependent helicase YEL077C (1277 aa).

One can recognise a Helicase ATP-binding domain in the interval 222–399 (EIYMADTPSV…LQRIGLTGLA (178 aa)). An ATP-binding site is contributed by 235–242 (APPGYGKT). The DEAH box signature appears at 345-348 (DEFH). A Helicase C-terminal domain is found at 454 to 605 (ALKLLLALFE…EFYGLESKKG (152 aa)). 2 disordered regions span residues 696–763 (NVRT…NATT) and 775–895 (TTKS…NRFH). Over residues 775 to 878 (TTKSINSSTN…ATTTESTNAS (104 aa)) the composition is skewed to low complexity. Basic and acidic residues predominate over residues 879 to 895 (AKEDANKDGNAEDNRFH).

Belongs to the helicase family. Yeast subtelomeric Y' repeat subfamily.

Catalyzes DNA unwinding and is involved in telomerase-independent telomere maintenance. The polypeptide is Y' element ATP-dependent helicase YEL077C (Saccharomyces cerevisiae (strain ATCC 204508 / S288c) (Baker's yeast)).